We begin with the raw amino-acid sequence, 440 residues long: Adenosylhomocysteinase (440 aa).

The substrate site is built by T64, D139, and E164. 165 to 167 (TTT) lines the NAD(+) pocket. Positions 194 and 198 each coordinate substrate. NAD(+) contacts are provided by residues N199, 228 to 233 (GFGDVG), E251, N286, 307 to 309 (IGH), and N352.

Belongs to the adenosylhomocysteinase family. NAD(+) serves as cofactor.

It localises to the cytoplasm. It catalyses the reaction S-adenosyl-L-homocysteine + H2O = L-homocysteine + adenosine. It functions in the pathway amino-acid biosynthesis; L-homocysteine biosynthesis; L-homocysteine from S-adenosyl-L-homocysteine: step 1/1. Functionally, may play a key role in the regulation of the intracellular concentration of adenosylhomocysteine. The chain is Adenosylhomocysteinase from Granulibacter bethesdensis (strain ATCC BAA-1260 / CGDNIH1).